The following is an 802-amino-acid chain: Chondroitin sulfate synthase 1 (802 aa).

The Cytoplasmic portion of the chain corresponds to 1-7 (MAARGRR). A helical; Signal-anchor for type II membrane protein membrane pass occupies residues 8–28 (AWLSVLLGLVLGFVLASRLVL). Residues 29 to 802 (PRASELKRAG…SNNNGSVRTA (774 aa)) are Lumenal-facing. The interval 34-82 (LKRAGPRRRASPEGCRSGQAAASQAGGARGDARGAQLWPPGSDPDGGPR) is disordered. 2 stretches are compositionally biased toward low complexity: residues 49-59 (RSGQAAASQAG) and 66-78 (RGAQLWPPGSDPD). N-linked (GlcNAc...) asparagine glycans are attached at residues Asn189 and Asn623. A divalent metal cation is bound by residues Asp633 and His747. A glycan (N-linked (GlcNAc...) asparagine) is linked at Asn796.

Belongs to the chondroitin N-acetylgalactosaminyltransferase family. Requires Co(2+) as cofactor. It depends on Mn(2+) as a cofactor. The cofactor is Cd(2+). Ubiquitous, with the highest levels in placenta. Detected at low levels in brain, heart, skeletal muscle, colon, thymus, spleen, kidney, liver, adrenal gland, mammary gland, stomach, small intestine, lung and peripheral blood leukocytes.

Its subcellular location is the golgi apparatus. The protein resides in the golgi stack membrane. It is found in the secreted. It carries out the reaction 3-O-(beta-D-GlcA-(1-&gt;3)-beta-D-GalNAc-(1-&gt;4)-beta-D-GlcA-(1-&gt;3)-beta-D-Gal-(1-&gt;3)-beta-D-Gal-(1-&gt;4)-beta-D-Xyl)-L-seryl-[protein] + UDP-N-acetyl-alpha-D-galactosamine = 3-O-(beta-D-GalNAc-(1-&gt;4)-beta-D-GlcA-(1-&gt;3)-beta-D-GalNAc-(1-&gt;4)-beta-D-GlcA-(1-&gt;3)-beta-D-Gal-(1-&gt;3)-beta-D-Gal-(1-&gt;4)-beta-D-Xyl)-L-seryl-[protein] + UDP + H(+). It catalyses the reaction 3-O-{beta-D-GlcA-(1-&gt;3)-[beta-D-GalNAc-(1-&gt;4)-beta-D-GlcA-(1-&gt;3)](n)-beta-D-GalNAc-(1-&gt;4)-beta-D-GlcA-(1-&gt;3)-beta-D-Gal-(1-&gt;3)-beta-D-Gal-(1-&gt;4)-beta-D-Xyl}-L-seryl-[protein] + UDP-N-acetyl-alpha-D-galactosamine = 3-O-{[beta-D-GalNAc-(1-&gt;4)-beta-D-GlcA-(1-&gt;3)](n+1)-beta-D-GalNAc-(1-&gt;4)-beta-D-GlcA-(1-&gt;3)-beta-D-Gal-(1-&gt;3)-beta-D-Gal-(1-&gt;4)-beta-D-Xyl}-L-seryl-[protein] + UDP + H(+). The enzyme catalyses 3-O-(beta-D-GalNAc-(1-&gt;4)-beta-D-GlcA-(1-&gt;3)-beta-D-Gal-(1-&gt;3)-beta-D-Gal-(1-&gt;4)-beta-D-Xyl)-L-seryl-[protein] + UDP-alpha-D-glucuronate = 3-O-(beta-D-GlcA-(1-&gt;3)-beta-D-GalNAc-(1-&gt;4)-beta-D-GlcA-(1-&gt;3)-beta-D-Gal-(1-&gt;3)-beta-D-Gal-(1-&gt;4)-beta-D-Xyl)-L-seryl-[protein] + UDP + H(+). The catalysed reaction is 3-O-{[beta-D-GalNAc-(1-&gt;4)-beta-D-GlcA-(1-&gt;3)](n)-beta-D-GalNAc-(1-&gt;4)-beta-D-GlcA-(1-&gt;3)-beta-D-Gal-(1-&gt;3)-beta-D-Gal-(1-&gt;4)-beta-D-Xyl}-L-seryl-[protein] + UDP-alpha-D-glucuronate = 3-O-{beta-D-GlcA-(1-&gt;3)-[beta-D-GalNAc-(1-&gt;4)-beta-D-GlcA-(1-&gt;3)](n)-beta-D-GalNAc-(1-&gt;4)-beta-D-GlcA-(1-&gt;3)-beta-D-Gal-(1-&gt;3)-beta-D-Gal-(1-&gt;4)-beta-D-Xyl}-L-seryl-[protein] + UDP + H(+). Functionally, has both beta-1,3-glucuronic acid and beta-1,4-N-acetylgalactosamine transferase activity. Transfers glucuronic acid (GlcUA) from UDP-GlcUA and N-acetylgalactosamine (GalNAc) from UDP-GalNAc to the non-reducing end of the elongating chondroitin polymer. Involved in the negative control of osteogenesis likely through the modulation of NOTCH signaling. The sequence is that of Chondroitin sulfate synthase 1 from Homo sapiens (Human).